The primary structure comprises 324 residues: Carbamate kinase (324 aa).

It belongs to the carbamate kinase family.

It localises to the cytoplasm. The catalysed reaction is hydrogencarbonate + NH4(+) + ATP = carbamoyl phosphate + ADP + H2O + H(+). It functions in the pathway amino-acid degradation; L-arginine degradation via ADI pathway. The chain is Carbamate kinase from Rhizobium meliloti (strain 1021) (Ensifer meliloti).